A 190-amino-acid chain; its full sequence is MILMKYSAILLICSVNLFCFQNKLTTSRWEFPKEDLIKKKIKIGIIYHNYINSIFYNENYKYIAFIGILTSYNEWIEIQFSPINFFTIPTNKDFISNTYFNLAFTIYITKYSILTDTLAIKFFIGTQIDLTLRTTIFTGKTTHAFLYPILPIITFKFEIDFIPNNYSIYYKLSTSFKEFILLDLGISIFI.

This is an uncharacterized protein from Borreliella burgdorferi (strain ATCC 35210 / DSM 4680 / CIP 102532 / B31) (Borrelia burgdorferi).